The primary structure comprises 487 residues: Ribosome biogenesis protein YTM1 (487 aa).

A ubiquitin-like (UBL) domain region spans residues 13 to 95 (VKVTFTTNEA…ETNLTLQYVR (83 aa)). WD repeat units follow at residues 122–161 (SPAG…LVTA), 168–206 (GHSA…ASGQ), 217–256 (GHRA…SPEA), 379–419 (GHTN…PASG), and 451–487 (GEGA…VVRE). Residues 253–277 (SPEADASLLPNAHTSKRRKVASSVT) are disordered.

This sequence belongs to the WD repeat WDR12/YTM1 family. As to quaternary structure, component of the NOP7 complex, composed of ERB1, NOP7 and YTM1. The complex is held together by ERB1, which interacts with NOP7 via its N-terminal domain and with YTM1 via a high-affinity interaction between the seven-bladed beta-propeller domains of the 2 proteins. The NOP7 complex associates with the 66S pre-ribosome. Interacts (via UBL domain) with MDN1 (via VWFA/MIDAS domain).

It localises to the nucleus. The protein resides in the nucleolus. Its subcellular location is the nucleoplasm. In terms of biological role, component of the NOP7 complex, which is required for maturation of the 25S and 5.8S ribosomal RNAs and formation of the 60S ribosome. The sequence is that of Ribosome biogenesis protein YTM1 from Podospora anserina (strain S / ATCC MYA-4624 / DSM 980 / FGSC 10383) (Pleurage anserina).